The primary structure comprises 373 residues: 3 beta-hydroxysteroid dehydrogenase/Delta 5--&gt;4-isomerase (373 aa).

The Proton acceptor role is filled by Tyr155. Residue Lys159 participates in NAD(+) binding. The helical transmembrane segment at 288–308 (ISLEYWLAFLLEIVSFLLSPI) threads the bilayer.

This sequence belongs to the 3-beta-HSD family.

The protein resides in the endoplasmic reticulum membrane. It localises to the mitochondrion membrane. It carries out the reaction a 3beta-hydroxy-Delta(5)-steroid + NAD(+) = a 3-oxo-Delta(5)-steroid + NADH + H(+). The catalysed reaction is a 3-oxo-Delta(5)-steroid = a 3-oxo-Delta(4)-steroid. Its pathway is lipid metabolism; steroid biosynthesis. Its function is as follows. 3-beta-HSD is a bifunctional enzyme, that catalyzes the oxidative conversion of Delta(5)-ene-3-beta-hydroxy steroid, and the oxidative conversion of ketosteroids. The 3-beta-HSD enzymatic system plays a crucial role in the biosynthesis of all classes of hormonal steroids. The chain is 3 beta-hydroxysteroid dehydrogenase/Delta 5--&gt;4-isomerase (HSD3B) from Canis lupus familiaris (Dog).